The primary structure comprises 136 residues: MAVKIRLKRFGKMRAPYYRIVVMDSRAKRDGRAIEEIGKYHPTEEPSYIEVASERAQYWLSVGAQPSEQVAAILKITGDWQKFKGLPGQEGTLKTKGEKEAFVAPEKGSVIIPEAITKKASKSEAAEAEAETTEAE.

The protein belongs to the bacterial ribosomal protein bS16 family.

The sequence is that of Small ribosomal subunit protein bS16 from Pseudarthrobacter chlorophenolicus (strain ATCC 700700 / DSM 12829 / CIP 107037 / JCM 12360 / KCTC 9906 / NCIMB 13794 / A6) (Arthrobacter chlorophenolicus).